We begin with the raw amino-acid sequence, 170 residues long: Cathelicidin antimicrobial peptide (170 aa).

The first 30 residues, 1–30 (MDTQRDSPSLGRWSLVLLLLGLVMPLAIVA), serve as a signal peptide directing secretion. The propeptide at 31–131 (QVLSYQEAVL…DISCDKDNRR (101 aa)) is cathelin-like domain (CLD). 2 disulfides stabilise this stretch: Cys-86/Cys-97 and Cys-108/Cys-125. The segment at 150–162 (FKRIVQRIKDFLQ) is active core.

It belongs to the cathelicidin family. As to quaternary structure, monomer, homodimer or homotrimer (in vitro). Oligomerizes as tetra- or hexamer in solution (in vitro). In terms of processing, proteolytically cleaved by proteinase PRTN3 into antibacterial peptide LL-37. Proteolytically cleaved by cathepsin CTSG and neutrophil elastase ELANE. Resistant to proteolytic degradation in solution, and when bound to both zwitterionic (mimicking mammalian membranes) and negatively charged membranes (mimicking bacterial membranes). Post-translationally, after secretion onto the skin surface, the CAMP gene product is processed by a serine protease-dependent mechanism into multiple novel antimicrobial peptides distinct from and shorter than cathelicidin LL-37. These peptides show enhanced antimicrobial action, acquiring the ability to kill skin pathogens such as S.aureus, E.coli and C.albicans. These peptides have lost the ability to stimulate CXCL8/IL8 release from keratinocytes. The peptides act synergistically, killing bacteria at lower concentrations when present together, and maintain activity at increased salt condition.

Its subcellular location is the secreted. It is found in the vesicle. In terms of biological role, antimicrobial protein that is an integral component of the innate immune system. Binds to bacterial lipopolysaccharides (LPS). Acts via neutrophil N-formyl peptide receptors to enhance the release of CXCL2. Postsecretory processing generates multiple cathelicidin antimicrobial peptides with various lengths which act as a topical antimicrobial defense in sweat on skin. The unprocessed precursor form, cathelicidin antimicrobial peptide, inhibits the growth of Gram-negative E.coli and E.aerogenes with efficiencies comparable to that of the mature peptide LL-37 (in vitro). Antimicrobial peptide that is an integral component of the innate immune system. Binds to bacterial lipopolysaccharides (LPS). Causes membrane permeabilization by forming transmembrane pores (in vitro). Causes lysis of E.coli. Exhibits antimicrobial activity against Gram-negative bacteria such as P.aeruginosa, S.typhimurium, E.aerogenes, E.coli and P.syringae, Gram-positive bacteria such as L.monocytogenes, S.epidermidis, S.pyogenes and S.aureus, as well as vancomycin-resistant enterococci (in vitro). Exhibits antimicrobial activity against methicillin-resistant S.aureus, P.mirabilis, and C.albicans in low-salt media, but not in media containing 100 mM NaCl (in vitro). Forms chiral supramolecular assemblies with quinolone signal (PQS) molecules of P.aeruginosa, which may lead to interference of bacterial quorum signaling and perturbance of bacterial biofilm formation. May form supramolecular fiber-like assemblies on bacterial membranes. Induces cytokine and chemokine producation as well as TNF/TNFA and CSF2/GMCSF production in normal human keratinocytes. Exhibits hemolytic activity against red blood cells. Its function is as follows. Exhibits antimicrobial activity against E.coli and B.megaterium (in vitro). This is Cathelicidin antimicrobial peptide from Nomascus leucogenys (Northern white-cheeked gibbon).